Consider the following 510-residue polypeptide: Myosin-binding protein C, cardiac-type (510 aa).

Ig-like C2-type domains are found at residues Lys177–Pro269, Pro270–Thr347, and Arg378–Pro438.

The protein belongs to the immunoglobulin superfamily. MyBP family. In terms of tissue distribution, heart.

In terms of biological role, thick filament-associated protein located in the crossbridge region of vertebrate striated muscle a bands. In vitro it binds MHC, F-actin and native thin filaments, and modifies the activity of actin-activated myosin ATPase. It may modulate muscle contraction or may play a more structural role. This is Myosin-binding protein C, cardiac-type from Ambystoma mexicanum (Axolotl).